Consider the following 120-residue polypeptide: Small ribosomal subunit protein uS13 (120 aa).

The segment at 96–120 (PCRGQRTRTNARTRKGPRKAIAGKK) is disordered.

The protein belongs to the universal ribosomal protein uS13 family. Part of the 30S ribosomal subunit. Forms a loose heterodimer with protein S19. Forms two bridges to the 50S subunit in the 70S ribosome.

Its function is as follows. Located at the top of the head of the 30S subunit, it contacts several helices of the 16S rRNA. In the 70S ribosome it contacts the 23S rRNA (bridge B1a) and protein L5 of the 50S subunit (bridge B1b), connecting the 2 subunits; these bridges are implicated in subunit movement. Contacts the tRNAs in the A and P-sites. This is Small ribosomal subunit protein uS13 from Chromobacterium violaceum (strain ATCC 12472 / DSM 30191 / JCM 1249 / CCUG 213 / NBRC 12614 / NCIMB 9131 / NCTC 9757 / MK).